A 299-amino-acid polypeptide reads, in one-letter code: 4-diphosphocytidyl-2-C-methyl-D-erythritol kinase (299 aa).

Residue K16 is part of the active site. 101–111 (PVAAGIGGGSA) contributes to the ATP binding site. D143 is a catalytic residue.

This sequence belongs to the GHMP kinase family. IspE subfamily.

It catalyses the reaction 4-CDP-2-C-methyl-D-erythritol + ATP = 4-CDP-2-C-methyl-D-erythritol 2-phosphate + ADP + H(+). Its pathway is isoprenoid biosynthesis; isopentenyl diphosphate biosynthesis via DXP pathway; isopentenyl diphosphate from 1-deoxy-D-xylulose 5-phosphate: step 3/6. In terms of biological role, catalyzes the phosphorylation of the position 2 hydroxy group of 4-diphosphocytidyl-2C-methyl-D-erythritol. The chain is 4-diphosphocytidyl-2-C-methyl-D-erythritol kinase from Rhodopseudomonas palustris (strain ATCC BAA-98 / CGA009).